A 391-amino-acid polypeptide reads, in one-letter code: Serpin-ZX (391 aa).

The segment at Gly337–Asp361 is RCL. Asn375 carries N-linked (GlcNAc...) asparagine glycosylation.

The protein belongs to the serpin family. Interacts with RD21A. Expressed in root tips. Expressed in siliques (at protein level).

The protein resides in the secreted. The protein localises to the extracellular space. Its subcellular location is the apoplast. It localises to the cytoplasm. Functionally, inhibits metacaspase-9 (MC9) cysteine protease. Functions through cleavage of its reactive center loop and covalent binding to MC9. Involved in the control of elicitor-stimulated programmed cell death (PCD). During infection by the necrotrophic fungal pathogen Botrytis cinerea, functions to protect cells by limiting the PCD-promoting protease RD21A activity that is released from the ER body or vacuole to the cytoplasm. Involved in the control of water stress-induced cell death by limiting the pro-death protease RD21A activity that is released from the vacuole to the cytoplasm. The chain is Serpin-ZX from Arabidopsis thaliana (Mouse-ear cress).